A 454-amino-acid chain; its full sequence is Growth/differentiation factor 6 (454 aa).

The first 22 residues, 1 to 22, serve as a signal peptide directing secretion; that stretch reads MDTPRVLLWAIFLISFLWDLPG. A propeptide spanning residues 23 to 334 is cleaved from the precursor; sequence FQQASISSSS…LPSPGRRRRR (312 aa). A disordered region spans residues 28-93; the sequence is ISSSSSSSTE…QGQEPPGRGL (66 aa). Basic and acidic residues-rich tracts occupy residues 39–52 and 60–73; these read DSTK…EGKM and AEGR…LRQK. Over residues 81-92 the composition is skewed to low complexity; it reads GQHQGQEPPGRG. Asparagine 117 carries an N-linked (GlcNAc...) asparagine glycan. Disordered regions lie at residues 247-268 and 303-350; these read DTGA…SLGF and AEAA…KKSR. Residues 303 to 319 are compositionally biased toward low complexity; the sequence is AEAAGAEGSWPAPSGSP. Basic residues predominate over residues 329–350; that stretch reads GRRRRRTAFASRHGKRHGKKSR. 3 cysteine pairs are disulfide-bonded: cysteine 353–cysteine 419, cysteine 382–cysteine 451, and cysteine 386–cysteine 453.

It belongs to the TGF-beta family. As to quaternary structure, homodimer; disulfide-linked. Expressed in different subsets of developing joints. Highly expressed in the cochlea.

It is found in the secreted. Its function is as follows. Growth factor that controls proliferation and cellular differentiation in the retina and bone formation. Plays a key role in regulating apoptosis during retinal development. Establishes dorsal-ventral positional information in the retina and controls the formation of the retinotectal map. Required for normal formation of bones and joints in the limbs, skull, digits and axial skeleton. Plays a key role in establishing boundaries between skeletal elements during development. Regulation of GDF6 expression seems to be a mechanism for evolving species-specific changes in skeletal structures. Seems to positively regulate differentiation of chondrogenic tissue through the growth factor receptors subunits BMPR1A, BMPR1B, BMPR2 and ACVR2A, leading to the activation of SMAD1-SMAD5-SMAD8 complex. The regulation of chondrogenic differentiation is inhibited by NOG. Also involved in the induction of adipogenesis from mesenchymal stem cells. This mechanism acts through the growth factor receptors subunits BMPR1A, BMPR2 and ACVR2A and the activation of SMAD1-SMAD5-SMAD8 complex and MAPK14/p38. The chain is Growth/differentiation factor 6 (Gdf6) from Mus musculus (Mouse).